We begin with the raw amino-acid sequence, 156 residues long: Small ribosomal subunit protein uS7 (156 aa).

It belongs to the universal ribosomal protein uS7 family. Part of the 30S ribosomal subunit. Contacts proteins S9 and S11.

In terms of biological role, one of the primary rRNA binding proteins, it binds directly to 16S rRNA where it nucleates assembly of the head domain of the 30S subunit. Is located at the subunit interface close to the decoding center, probably blocks exit of the E-site tRNA. This Synechococcus sp. (strain JA-3-3Ab) (Cyanobacteria bacterium Yellowstone A-Prime) protein is Small ribosomal subunit protein uS7.